Consider the following 144-residue polypeptide: MDKQQGELRQRLTPEQYAVTQEAATERPFSGEYDNFYQEGIYVDVVSGQALFSSRDKYDAGCGWPSFTKPIDQTNLNEHRDESFGMHRTEVTSTQANSHLGHVFPDGPRDRGGLRYCINSAALKFIPVADLEKAGYGQYQSLFK.

Basic and acidic residues predominate over residues 1 to 12 (MDKQQGELRQRL). A disordered region spans residues 1–25 (MDKQQGELRQRLTPEQYAVTQEAAT). The MsrB domain maps to 5–128 (QGELRQRLTP…NSAALKFIPV (124 aa)). Cys117 functions as the Nucleophile in the catalytic mechanism.

This sequence belongs to the MsrB Met sulfoxide reductase family.

The catalysed reaction is L-methionyl-[protein] + [thioredoxin]-disulfide + H2O = L-methionyl-(R)-S-oxide-[protein] + [thioredoxin]-dithiol. The chain is Peptide methionine sulfoxide reductase MsrB from Lactiplantibacillus plantarum (strain ATCC BAA-793 / NCIMB 8826 / WCFS1) (Lactobacillus plantarum).